Reading from the N-terminus, the 427-residue chain is Glutamyl-tRNA reductase (427 aa).

Substrate contacts are provided by residues 49–52, serine 101, 106–108, and glutamine 112; these read TCNR and EPQ. Cysteine 50 acts as the Nucleophile in catalysis. 181 to 186 contacts NADP(+); that stretch reads GAGETI. Residues 407-427 form a disordered region; it reads FPATPGYRHPPVRPDDADPAP. Residues 418 to 427 are compositionally biased toward basic and acidic residues; it reads VRPDDADPAP.

The protein belongs to the glutamyl-tRNA reductase family. In terms of assembly, homodimer.

It carries out the reaction (S)-4-amino-5-oxopentanoate + tRNA(Glu) + NADP(+) = L-glutamyl-tRNA(Glu) + NADPH + H(+). Its pathway is porphyrin-containing compound metabolism; protoporphyrin-IX biosynthesis; 5-aminolevulinate from L-glutamyl-tRNA(Glu): step 1/2. Catalyzes the NADPH-dependent reduction of glutamyl-tRNA(Glu) to glutamate 1-semialdehyde (GSA). This is Glutamyl-tRNA reductase from Stenotrophomonas maltophilia (strain K279a).